The primary structure comprises 597 residues: FERM domain-containing protein 3 (597 aa).

Residues 32 to 312 (MRCTIRLLDD…ENQAFYKYAK (281 aa)) enclose the FERM domain. The segment at 383 to 403 (LLPSPSEQEEELPLGEGVPLP) is disordered. Residues 531–551 (LLVVGLGLLLFVFPLLLLLLE) form a helical membrane-spanning segment.

As to expression, ovary-specific.

It is found in the membrane. In terms of biological role, putative tumor suppressor gene that may be implicated in the origin and progression of lung cancer. The polypeptide is FERM domain-containing protein 3 (FRMD3) (Homo sapiens (Human)).